A 503-amino-acid polypeptide reads, in one-letter code: UPF0522 protein C (503 aa).

An N-terminal signal peptide occupies residues M1–S18. N330, N337, and N370 each carry an N-linked (GlcNAc...) asparagine glycan.

Belongs to the UPF0522 family.

It is found in the secreted. The sequence is that of UPF0522 protein C from Dictyostelium discoideum (Social amoeba).